Consider the following 109-residue polypeptide: Large ribosomal subunit protein uL23 (109 aa).

It belongs to the universal ribosomal protein uL23 family. As to quaternary structure, part of the 50S ribosomal subunit. Contacts protein L29, and trigger factor when it is bound to the ribosome.

In terms of biological role, one of the early assembly proteins it binds 23S rRNA. One of the proteins that surrounds the polypeptide exit tunnel on the outside of the ribosome. Forms the main docking site for trigger factor binding to the ribosome. The sequence is that of Large ribosomal subunit protein uL23 from Chlorobium phaeobacteroides (strain BS1).